A 157-amino-acid chain; its full sequence is Small ribosomal subunit protein uS7 (157 aa).

It belongs to the universal ribosomal protein uS7 family. In terms of assembly, part of the 30S ribosomal subunit. Contacts proteins S9 and S11.

Its function is as follows. One of the primary rRNA binding proteins, it binds directly to 16S rRNA where it nucleates assembly of the head domain of the 30S subunit. Is located at the subunit interface close to the decoding center, probably blocks exit of the E-site tRNA. The polypeptide is Small ribosomal subunit protein uS7 (Borreliella afzelii (strain PKo) (Borrelia afzelii)).